The chain runs to 382 residues: ATP phosphoribosyltransferase regulatory subunit (382 aa).

Belongs to the class-II aminoacyl-tRNA synthetase family. HisZ subfamily. Heteromultimer composed of HisG and HisZ subunits.

The protein localises to the cytoplasm. The protein operates within amino-acid biosynthesis; L-histidine biosynthesis; L-histidine from 5-phospho-alpha-D-ribose 1-diphosphate: step 1/9. Functionally, required for the first step of histidine biosynthesis. May allow the feedback regulation of ATP phosphoribosyltransferase activity by histidine. This is ATP phosphoribosyltransferase regulatory subunit from Burkholderia ambifaria (strain MC40-6).